A 246-amino-acid chain; its full sequence is MPTKVVKHFLNQGLLRTKIDEWLAQNFYEAGYSRVKVVQTSLGTNITIWAERPALIIGRRGATIRRLQEVFQTVFGLPNPRIRVEQPENPMLDARVQAFRIARSIERGIHFRRVAFAAINRIMSNGALGVEITISGKLTSERARFEKFKAGKVYKSGHKVDELVDRASAYARLPKGVIGVDVIIVKPGKPGDHVRIKSEEEVKDVVDAIRSEIESLGLQEETASTLREHMEAARPGEEHEEDREES.

One can recognise a KH type-2 domain in the interval 19–98 (IDEWLAQNFY…NPMLDARVQA (80 aa)). Residues 218–246 (LQEETASTLREHMEAARPGEEHEEDREES) are disordered. The span at 226-237 (LREHMEAARPGE) shows a compositional bias: basic and acidic residues.

The protein belongs to the universal ribosomal protein uS3 family. As to quaternary structure, part of the 30S ribosomal subunit.

Its function is as follows. Binds the lower part of the 30S subunit head. This chain is Small ribosomal subunit protein uS3, found in Aeropyrum pernix (strain ATCC 700893 / DSM 11879 / JCM 9820 / NBRC 100138 / K1).